Consider the following 150-residue polypeptide: Large ribosomal subunit protein bL9 (150 aa).

It belongs to the bacterial ribosomal protein bL9 family.

Its function is as follows. Binds to the 23S rRNA. The sequence is that of Large ribosomal subunit protein bL9 from Pseudoalteromonas atlantica (strain T6c / ATCC BAA-1087).